A 397-amino-acid chain; its full sequence is Na(+)/H(+) antiporter NhaA 2 (397 aa).

The next 11 helical transmembrane spans lie at 9-29 (LHNPAASGILIFLAAVAAMAV), 59-79 (LLLWINDGLMAVFFLLVGLEL), 95-115 (ILPVVGAVGGIALPAAIYTLI), 125-145 (GWAIPTATDIAFALGILALLG), 154-174 (LFLLTLAIIDDLAAILIIAFF), 177-197 (SELSPASLMIAGSAIGTLILM), 222-242 (SGVHATLAGVVLGFVIPLKGE), 260-280 (VVGLGILPLFAFANAGVSLQG), 292-312 (LGIALGLFLGKQIGVFGFVWL), 332-352 (GVALLCGVGFTMSLFISSLAF), and 371-391 (LGILTGSILSGIFGYILLRFS).

This sequence belongs to the NhaA Na(+)/H(+) (TC 2.A.33) antiporter family.

It is found in the cell inner membrane. It catalyses the reaction Na(+)(in) + 2 H(+)(out) = Na(+)(out) + 2 H(+)(in). In terms of biological role, na(+)/H(+) antiporter that extrudes sodium in exchange for external protons. The protein is Na(+)/H(+) antiporter NhaA 2 of Magnetococcus marinus (strain ATCC BAA-1437 / JCM 17883 / MC-1).